Consider the following 98-residue polypeptide: Small ribosomal subunit protein bS20 (98 aa).

A compositionally biased stretch (basic residues) spans 1-15 (MAPKKTTKKGGPKKR). Residues 1–21 (MAPKKTTKKGGPKKRPSAEKR) form a disordered region.

The protein belongs to the bacterial ribosomal protein bS20 family.

Its function is as follows. Binds directly to 16S ribosomal RNA. The sequence is that of Small ribosomal subunit protein bS20 from Chlamydia felis (strain Fe/C-56) (Chlamydophila felis).